A 121-amino-acid polypeptide reads, in one-letter code: Large ribosomal subunit protein bL12 (121 aa).

Belongs to the bacterial ribosomal protein bL12 family. In terms of assembly, homodimer. Part of the ribosomal stalk of the 50S ribosomal subunit. Forms a multimeric L10(L12)X complex, where L10 forms an elongated spine to which 2 to 4 L12 dimers bind in a sequential fashion. Binds GTP-bound translation factors.

Functionally, forms part of the ribosomal stalk which helps the ribosome interact with GTP-bound translation factors. Is thus essential for accurate translation. The sequence is that of Large ribosomal subunit protein bL12 from Alkaliphilus oremlandii (strain OhILAs) (Clostridium oremlandii (strain OhILAs)).